Here is a 156-residue protein sequence, read N- to C-terminus: Small ribosomal subunit protein uS7 (156 aa).

Belongs to the universal ribosomal protein uS7 family. As to quaternary structure, part of the 30S ribosomal subunit. Contacts proteins S9 and S11.

One of the primary rRNA binding proteins, it binds directly to 16S rRNA where it nucleates assembly of the head domain of the 30S subunit. Is located at the subunit interface close to the decoding center, probably blocks exit of the E-site tRNA. This chain is Small ribosomal subunit protein uS7, found in Enterobacter sp. (strain 638).